The following is a 115-amino-acid chain: Large ribosomal subunit protein bL19 (115 aa).

This sequence belongs to the bacterial ribosomal protein bL19 family.

Functionally, this protein is located at the 30S-50S ribosomal subunit interface and may play a role in the structure and function of the aminoacyl-tRNA binding site. This Caldanaerobacter subterraneus subsp. tengcongensis (strain DSM 15242 / JCM 11007 / NBRC 100824 / MB4) (Thermoanaerobacter tengcongensis) protein is Large ribosomal subunit protein bL19.